Reading from the N-terminus, the 395-residue chain is S-adenosylmethionine synthase (395 aa).

H18 contacts ATP. D20 is a binding site for Mg(2+). Position 46 (E46) interacts with K(+). Residues E59 and Q103 each coordinate L-methionine. Residues 103–113 (QSADIAVGVDS) form a flexible loop region. Residues 170–172 (DAK), D244, 250–251 (RK), A267, and K271 contribute to the ATP site. L-methionine is bound at residue D244. K275 is a binding site for L-methionine.

The protein belongs to the AdoMet synthase family. In terms of assembly, homotetramer; dimer of dimers. It depends on Mg(2+) as a cofactor. K(+) is required as a cofactor.

The protein resides in the cytoplasm. The catalysed reaction is L-methionine + ATP + H2O = S-adenosyl-L-methionine + phosphate + diphosphate. Its pathway is amino-acid biosynthesis; S-adenosyl-L-methionine biosynthesis; S-adenosyl-L-methionine from L-methionine: step 1/1. Catalyzes the formation of S-adenosylmethionine (AdoMet) from methionine and ATP. The overall synthetic reaction is composed of two sequential steps, AdoMet formation and the subsequent tripolyphosphate hydrolysis which occurs prior to release of AdoMet from the enzyme. The sequence is that of S-adenosylmethionine synthase from Gluconacetobacter diazotrophicus (strain ATCC 49037 / DSM 5601 / CCUG 37298 / CIP 103539 / LMG 7603 / PAl5).